A 483-amino-acid polypeptide reads, in one-letter code: Glutamate--tRNA ligase (483 aa).

The short motif at 14 to 24 is the 'HIGH' region element; that stretch reads PSPTGDPHVGT. Positions 253-257 match the 'KMSKS' region motif; that stretch reads KISKR. Lysine 256 is a binding site for ATP.

Belongs to the class-I aminoacyl-tRNA synthetase family. Glutamate--tRNA ligase type 1 subfamily. In terms of assembly, monomer.

The protein localises to the cytoplasm. The catalysed reaction is tRNA(Glu) + L-glutamate + ATP = L-glutamyl-tRNA(Glu) + AMP + diphosphate. In terms of biological role, catalyzes the attachment of glutamate to tRNA(Glu) in a two-step reaction: glutamate is first activated by ATP to form Glu-AMP and then transferred to the acceptor end of tRNA(Glu). The protein is Glutamate--tRNA ligase of Deinococcus radiodurans (strain ATCC 13939 / DSM 20539 / JCM 16871 / CCUG 27074 / LMG 4051 / NBRC 15346 / NCIMB 9279 / VKM B-1422 / R1).